The following is a 941-amino-acid chain: Isoleucine--tRNA ligase (941 aa).

Positions 59-69 match the 'HIGH' region motif; the sequence is PYANGNIHIGH. Position 562 (Glu562) interacts with L-isoleucyl-5'-AMP. The short motif at 603–607 is the 'KMSKS' region element; sequence KMSKS. ATP is bound at residue Lys606. Residues Cys904, Cys907, Cys924, and Cys927 each contribute to the Zn(2+) site.

Belongs to the class-I aminoacyl-tRNA synthetase family. IleS type 1 subfamily. As to quaternary structure, monomer. It depends on Zn(2+) as a cofactor.

It localises to the cytoplasm. The catalysed reaction is tRNA(Ile) + L-isoleucine + ATP = L-isoleucyl-tRNA(Ile) + AMP + diphosphate. Its function is as follows. Catalyzes the attachment of isoleucine to tRNA(Ile). As IleRS can inadvertently accommodate and process structurally similar amino acids such as valine, to avoid such errors it has two additional distinct tRNA(Ile)-dependent editing activities. One activity is designated as 'pretransfer' editing and involves the hydrolysis of activated Val-AMP. The other activity is designated 'posttransfer' editing and involves deacylation of mischarged Val-tRNA(Ile). The protein is Isoleucine--tRNA ligase of Haemophilus influenzae (strain PittGG).